The chain runs to 164 residues: Phosphopantetheine adenylyltransferase (164 aa).

Residue Ser-9 participates in substrate binding. Residues Ser-9 to Phe-10 and His-17 each bind ATP. Lys-41, Val-78, and Arg-92 together coordinate substrate. ATP-binding positions include Gly-93–Arg-95, Glu-103, and Ser-128–Thr-134.

It belongs to the bacterial CoaD family. Homohexamer. Mg(2+) serves as cofactor.

The protein resides in the cytoplasm. The catalysed reaction is (R)-4'-phosphopantetheine + ATP + H(+) = 3'-dephospho-CoA + diphosphate. Its pathway is cofactor biosynthesis; coenzyme A biosynthesis; CoA from (R)-pantothenate: step 4/5. In terms of biological role, reversibly transfers an adenylyl group from ATP to 4'-phosphopantetheine, yielding dephospho-CoA (dPCoA) and pyrophosphate. This Rhizobium etli (strain ATCC 51251 / DSM 11541 / JCM 21823 / NBRC 15573 / CFN 42) protein is Phosphopantetheine adenylyltransferase.